A 310-amino-acid polypeptide reads, in one-letter code: Homoserine kinase (310 aa).

Residue P91–C101 coordinates ATP.

The protein belongs to the GHMP kinase family. Homoserine kinase subfamily.

It localises to the cytoplasm. The catalysed reaction is L-homoserine + ATP = O-phospho-L-homoserine + ADP + H(+). It functions in the pathway amino-acid biosynthesis; L-threonine biosynthesis; L-threonine from L-aspartate: step 4/5. Functionally, catalyzes the ATP-dependent phosphorylation of L-homoserine to L-homoserine phosphate. In Escherichia coli (strain K12 / MC4100 / BW2952), this protein is Homoserine kinase.